The chain runs to 180 residues: MENFFNQFFENIGEDKNREGLKNTPKRVQELWNFLYKGYKEDPKVALKSAYFQGVCDEMIVAQHIEFYSTCEHHLLPFFGNISLGYIPKEKIIGISAIAKLIEIYSKRLQIQERLTTQIAETFDEIIEPRGVIVICEAKHLCMSMQGVQKQNAIIKTSALKGLFKKDPKTRAEFMQLLKS.

Residues cysteine 71, histidine 74, and cysteine 142 each contribute to the Zn(2+) site.

Belongs to the GTP cyclohydrolase I family. Toroid-shaped homodecamer, composed of two pentamers of five dimers.

It catalyses the reaction GTP + H2O = 7,8-dihydroneopterin 3'-triphosphate + formate + H(+). The protein operates within cofactor biosynthesis; 7,8-dihydroneopterin triphosphate biosynthesis; 7,8-dihydroneopterin triphosphate from GTP: step 1/1. This chain is GTP cyclohydrolase 1, found in Helicobacter acinonychis (strain Sheeba).